Reading from the N-terminus, the 663-residue chain is UvrABC system protein B (663 aa).

The span at 1 to 10 (MIDKRDDKPF) shows a compositional bias: basic and acidic residues. A disordered region spans residues 1–23 (MIDKRDDKPFKLKSKYKPSGDQP). The Helicase ATP-binding domain occupies 31–271 (DNIEGGEKAQ…EQSIAKIQAE (241 aa)). 44–51 (GATGTGKT) serves as a coordination point for ATP. The short motif at 97–120 (YYDYYQPEAYVPSSDTYIEKDSSV) is the Beta-hairpin element. Positions 435 to 601 (QMDDLLGEIN…TIKKDIRGLI (167 aa)) constitute a Helicase C-terminal domain. Positions 627 to 662 (KEAINALQKQMQEAAELLDFELAAQMRDLILELKLM) constitute a UVR domain.

The protein belongs to the UvrB family. Forms a heterotetramer with UvrA during the search for lesions. Interacts with UvrC in an incision complex.

The protein localises to the cytoplasm. The UvrABC repair system catalyzes the recognition and processing of DNA lesions. A damage recognition complex composed of 2 UvrA and 2 UvrB subunits scans DNA for abnormalities. Upon binding of the UvrA(2)B(2) complex to a putative damaged site, the DNA wraps around one UvrB monomer. DNA wrap is dependent on ATP binding by UvrB and probably causes local melting of the DNA helix, facilitating insertion of UvrB beta-hairpin between the DNA strands. Then UvrB probes one DNA strand for the presence of a lesion. If a lesion is found the UvrA subunits dissociate and the UvrB-DNA preincision complex is formed. This complex is subsequently bound by UvrC and the second UvrB is released. If no lesion is found, the DNA wraps around the other UvrB subunit that will check the other stand for damage. The sequence is that of UvrABC system protein B from Streptococcus pyogenes serotype M4 (strain MGAS10750).